The following is a 464-amino-acid chain: 3-isopropylmalate dehydratase large subunit (464 aa).

Positions 337, 397, and 400 each coordinate [4Fe-4S] cluster.

The protein belongs to the aconitase/IPM isomerase family. LeuC type 1 subfamily. In terms of assembly, heterodimer of LeuC and LeuD. It depends on [4Fe-4S] cluster as a cofactor.

It catalyses the reaction (2R,3S)-3-isopropylmalate = (2S)-2-isopropylmalate. Its pathway is amino-acid biosynthesis; L-leucine biosynthesis; L-leucine from 3-methyl-2-oxobutanoate: step 2/4. Its function is as follows. Catalyzes the isomerization between 2-isopropylmalate and 3-isopropylmalate, via the formation of 2-isopropylmaleate. The sequence is that of 3-isopropylmalate dehydratase large subunit from Bacillus cereus (strain G9842).